The sequence spans 156 residues: Small ribosomal subunit protein uS7 (156 aa).

Belongs to the universal ribosomal protein uS7 family. As to quaternary structure, part of the 30S ribosomal subunit. Contacts proteins S9 and S11.

In terms of biological role, one of the primary rRNA binding proteins, it binds directly to 16S rRNA where it nucleates assembly of the head domain of the 30S subunit. Is located at the subunit interface close to the decoding center, probably blocks exit of the E-site tRNA. This Synechococcus sp. (strain JA-3-3Ab) (Cyanobacteria bacterium Yellowstone A-Prime) protein is Small ribosomal subunit protein uS7.